Reading from the N-terminus, the 240-residue chain is Ribonuclease PH (240 aa).

Phosphate contacts are provided by residues R87 and 125–127; that span reads GTR.

It belongs to the RNase PH family. As to quaternary structure, homohexameric ring arranged as a trimer of dimers.

The enzyme catalyses tRNA(n+1) + phosphate = tRNA(n) + a ribonucleoside 5'-diphosphate. In terms of biological role, phosphorolytic 3'-5' exoribonuclease that plays an important role in tRNA 3'-end maturation. Removes nucleotide residues following the 3'-CCA terminus of tRNAs; can also add nucleotides to the ends of RNA molecules by using nucleoside diphosphates as substrates, but this may not be physiologically important. Probably plays a role in initiation of 16S rRNA degradation (leading to ribosome degradation) during starvation. The protein is Ribonuclease PH of Stutzerimonas stutzeri (strain A1501) (Pseudomonas stutzeri).